Consider the following 107-residue polypeptide: Putative double-stranded DNA mimic protein HI_1450 (107 aa).

It belongs to the putative dsDNA mimic protein family. In terms of assembly, monomer in solution. Interacts with the DNA-binding protein HU.

Functionally, may act as a double-stranded DNA (dsDNA) mimic. Probably regulates the activity of the DNA-binding protein HU. The chain is Putative double-stranded DNA mimic protein HI_1450 from Haemophilus influenzae (strain ATCC 51907 / DSM 11121 / KW20 / Rd).